The primary structure comprises 665 residues: DNA ligase (665 aa).

Residues 31 to 35, 80 to 81, and glutamate 110 each bind NAD(+); these read DKEFD and SL. Lysine 112 serves as the catalytic N6-AMP-lysine intermediate. 4 residues coordinate NAD(+): arginine 133, glutamate 170, lysine 285, and lysine 309. Residues cysteine 403, cysteine 406, cysteine 421, and cysteine 427 each coordinate Zn(2+). Positions 587–665 constitute a BRCT domain; sequence GHTDKLAGQS…NEEEFLKLIS (79 aa).

Belongs to the NAD-dependent DNA ligase family. LigA subfamily. Mg(2+) is required as a cofactor. It depends on Mn(2+) as a cofactor.

It catalyses the reaction NAD(+) + (deoxyribonucleotide)n-3'-hydroxyl + 5'-phospho-(deoxyribonucleotide)m = (deoxyribonucleotide)n+m + AMP + beta-nicotinamide D-nucleotide.. In terms of biological role, DNA ligase that catalyzes the formation of phosphodiester linkages between 5'-phosphoryl and 3'-hydroxyl groups in double-stranded DNA using NAD as a coenzyme and as the energy source for the reaction. It is essential for DNA replication and repair of damaged DNA. The protein is DNA ligase of Bacteroides fragilis (strain ATCC 25285 / DSM 2151 / CCUG 4856 / JCM 11019 / LMG 10263 / NCTC 9343 / Onslow / VPI 2553 / EN-2).